We begin with the raw amino-acid sequence, 274 residues long: Bis(5'-nucleosyl)-tetraphosphatase, symmetrical (274 aa).

This sequence belongs to the Ap4A hydrolase family.

It carries out the reaction P(1),P(4)-bis(5'-adenosyl) tetraphosphate + H2O = 2 ADP + 2 H(+). In terms of biological role, hydrolyzes diadenosine 5',5'''-P1,P4-tetraphosphate to yield ADP. The protein is Bis(5'-nucleosyl)-tetraphosphatase, symmetrical of Shewanella baltica (strain OS185).